A 340-amino-acid polypeptide reads, in one-letter code: Aurora kinase A- and ninein-interacting protein (340 aa).

The interaction with AURKA stretch occupies residues 175 to 340 (QREAKRKGEG…DSEGNRVIRH (166 aa)). Positions 178–190 (AKRKGEGLRESKT) are enriched in basic and acidic residues. The tract at residues 178 to 209 (AKRKGEGLRESKTDCPGMGSHIRPPGSKCHQP) is disordered. Positions 266–340 (RDSWSQLFTE…DSEGNRVIRH (75 aa)) are interaction with RBBP8/CtIP. Ser-277 is subject to Phosphoserine. The tract at residues 293 to 317 (DVTNARNQGSGQFPDSPQAQGQDGP) is disordered. Polar residues predominate over residues 296 to 313 (NARNQGSGQFPDSPQAQG).

Belongs to the AUNIP family. As to quaternary structure, interacts (via C-terminus) with AURKA (via C-terminus). Interacts (via N-terminus) with NIN; this interaction blocks NIN phosphorylation by both AURKA and GSK3B. Identified in a complex with NIN and AURKA. Interacts with RBBP8/CtIP.

The protein localises to the nucleus. It is found in the chromosome. Its subcellular location is the cytoplasm. The protein resides in the cytoskeleton. It localises to the microtubule organizing center. The protein localises to the centrosome. It is found in the spindle pole. In terms of biological role, DNA-binding protein that accumulates at DNA double-strand breaks (DSBs) following DNA damage and promotes DNA resection and homologous recombination. Serves as a sensor of DNA damage: binds DNA with a strong preference for DNA substrates that mimic structures generated at stalled replication forks, and anchors RBBP8/CtIP to DSB sites to promote DNA end resection and ensuing homologous recombination repair. Inhibits non-homologous end joining (NHEJ). Required for the dynamic movement of AURKA at the centrosomes and spindle apparatus during the cell cycle. This chain is Aurora kinase A- and ninein-interacting protein, found in Mus musculus (Mouse).